The primary structure comprises 216 residues: Transmembrane emp24 domain-containing protein eca (216 aa).

The N-terminal stretch at 1 to 20 is a signal peptide; it reads MRDQILSLALLLCVLHSACG. Topologically, residues 21 to 182 are lumenal; sequence LYFHISETER…FRHTSESTNS (162 aa). The GOLD domain occupies 30–126; it reads RKCFIEEVPD…QLRVHLDIQV (97 aa). Residues 134–164 adopt a coiled-coil conformation; it reads ANVAQKEKLTELQLRIRQLLDQVEQITKEQN. A helical transmembrane segment spans residues 183-203; it reads RVLWWSLAQTVVLVCMGFWQM. The Cytoplasmic segment spans residues 204 to 216; the sequence is RHLKSFFEAKKLV. The Prevents secretion from ER signature appears at 213–216; it reads KKLV.

Belongs to the EMP24/GP25L family.

The protein localises to the endoplasmic reticulum membrane. Its function is as follows. Eca and bai are essential, though not redundant, for dorsoventral patterning of the embryo. Specifically required during early embryogenesis for the activity of maternal tkv, while the zygotic tkv is not affected. Involved in Golgi organization. This Drosophila ananassae (Fruit fly) protein is Transmembrane emp24 domain-containing protein eca.